The chain runs to 340 residues: DnaJ homolog subfamily B member 1 (340 aa).

Residues 2–70 (GKDYYQTLGL…REIFDRYGEE (69 aa)) form the J domain. T307 is subject to Phosphothreonine.

Interacts with DNAJC3. Interacts with HSF1 (via transactivation domain); this interaction results in the inhibition of heat shock- and HSF1-induced transcriptional activity during the attenuation and recovery phase period of the heat shock response. Interacts with BAG3.

The protein localises to the cytoplasm. Its subcellular location is the nucleus. The protein resides in the nucleolus. Interacts with HSP70 and can stimulate its ATPase activity. Stimulates the association between HSC70 and HIP. Negatively regulates heat shock-induced HSF1 transcriptional activity during the attenuation and recovery phase period of the heat shock response. Stimulates ATP hydrolysis and the folding of unfolded proteins mediated by HSPA1A/B (in vitro). In Homo sapiens (Human), this protein is DnaJ homolog subfamily B member 1 (DNAJB1).